The sequence spans 207 residues: Arginine exporter protein ArgO (207 aa).

A run of 6 helical transmembrane segments spans residues 1-21 (MLSTFVQGFFLSAAMILPLGP), 42-62 (LCAISDGFLIGVGVFGGSALL), 67-87 (LLLQFVTWGGVAFLFWYGWGA), 111-131 (VVAIIFAVTWLNPHVYLDTIV), 150-170 (FGAASASVSWFFSLSLLAAWF), and 185-205 (GFICIIMWYIAWQLAKQGLLI).

Belongs to the LysE/ArgO transporter (TC 2.A.75) family.

It localises to the cell inner membrane. The enzyme catalyses L-arginine(in) = L-arginine(out). Involved in the export of arginine. Important to control the intracellular level of arginine and the correct balance between arginine and lysine. The polypeptide is Arginine exporter protein ArgO (Photorhabdus laumondii subsp. laumondii (strain DSM 15139 / CIP 105565 / TT01) (Photorhabdus luminescens subsp. laumondii)).